Consider the following 209-residue polypeptide: Uracil phosphoribosyltransferase (209 aa).

Residues Arg-79, Arg-104, and 131-139 each bind 5-phospho-alpha-D-ribose 1-diphosphate; that span reads DPMLATGGS. Residues Ile-194 and 199–201 contribute to the uracil site; that span reads GDA. Position 200 (Asp-200) interacts with 5-phospho-alpha-D-ribose 1-diphosphate.

This sequence belongs to the UPRTase family. Mg(2+) serves as cofactor.

It catalyses the reaction UMP + diphosphate = 5-phospho-alpha-D-ribose 1-diphosphate + uracil. It functions in the pathway pyrimidine metabolism; UMP biosynthesis via salvage pathway; UMP from uracil: step 1/1. Allosterically activated by GTP. Its function is as follows. Catalyzes the conversion of uracil and 5-phospho-alpha-D-ribose 1-diphosphate (PRPP) to UMP and diphosphate. The sequence is that of Uracil phosphoribosyltransferase from Alkaliphilus metalliredigens (strain QYMF).